We begin with the raw amino-acid sequence, 247 residues long: Probable transcriptional regulatory protein BHWA1_01533 (247 aa).

A disordered region spans residues 1–22 (MSGHSKWASIKHKKAANDSKKG).

The protein belongs to the TACO1 family.

It localises to the cytoplasm. The sequence is that of Probable transcriptional regulatory protein BHWA1_01533 from Brachyspira hyodysenteriae (strain ATCC 49526 / WA1).